The following is a 124-amino-acid chain: Galanin peptides (124 aa).

A signal peptide spans 1–19; it reads MARGSVILLGWLLLVVTLS. Residues 20–30 constitute a propeptide that is removed on maturation; sequence ATLGLGMPAKE. The residue at position 61 (Thr61) is a Threonine amide. Ser117 and Ser118 each carry phosphoserine.

Belongs to the galanin family. In terms of tissue distribution, expressed in retinal progenitor cells and retinal ganglion cells (at protein level).

It is found in the secreted. Endocrine hormone of the central and peripheral nervous systems that binds and activates the G protein-coupled receptors GALR1, GALR2, and GALR3. This small neuropeptide may regulate diverse physiologic functions including contraction of smooth muscle of the gastrointestinal and genitourinary tract, growth hormone and insulin release and adrenal secretion. This is Galanin peptides (Gal) from Mus musculus (Mouse).